The primary structure comprises 239 residues: Terpene cyclase idtB (239 aa).

A run of 5 helical transmembrane segments spans residues 20 to 40 (MADT…ALMI), 50 to 70 (CMAL…TIVY), 75 to 95 (RVEL…MVGA), 113 to 133 (AGFI…ALAM), and 138 to 158 (GLAY…GGLF). The N-linked (GlcNAc...) asparagine glycan is linked to asparagine 164. The helical transmembrane segment at 197–217 (EVFGWLASPLVLWSLVTFLLA) threads the bilayer.

This sequence belongs to the paxB family.

It is found in the membrane. It participates in secondary metabolite biosynthesis. Its function is as follows. Terpene cyclase; part of the gene cluster that mediates the biosynthesis of paspalitrems, indole-diterpene (IDT) mycotoxins that are potent tremorgens in mammals. The geranylgeranyl diphosphate (GGPP) synthase idtG is proposed to catalyze the first step in IDT biosynthesis via catalysis of a series of iterative condensations of isopentenyl diphosphate (IPP) with dimethylallyl diphosphate (DMAPP), geranyl diphosphate (GPP), and farnesyl diphosphate (FPP), to form GGPP. Condensation of indole-3-glycerol phosphate with GGPP by the prenyltransferase idtC then forms 3-geranylgeranylindole (3-GGI). Epoxidation of the two terminal alkenes of the geranylgeranyl moiety by the FAD-dependent monooxygenase idtM, and cyclization by the terpene cyclase idtB then leads to the production of paspaline. The cytochrome P450 monooxygenase idtP then catalyzes oxidative elimination of the pendant methyl group at C-12 of paspaline and generates the C-10 ketone to yield 13-desoxypaxilline. The cytochrome P450 monooxygenase idtQ may catalyze the C-13 oxidation of 13-desoxypaxilline to afford paxilline. Considering that both paspalicine and paxilline were detected in C.paspali, idtQ also catalyzes the formation of paspalinine from 13-desoxypaxilline via paspalicine as an intermediate. Finally, the alpha-prenyltransferase idtF prenylates paspalinine at the C-20 or the C-21 positions to yield paspalitrems A and C, respectively. The hydroxylation of paspalitrem A at C-32 by a still unknown oxidase affords paspalitrem B. The chain is Terpene cyclase idtB from Claviceps paspali (Rye ergot fungus).